The chain runs to 449 residues: Probable multidrug resistance protein NorM (449 aa).

12 helical membrane-spanning segments follow: residues 17–39, 54–76, 97–119, 129–151, 164–186, 196–215, 243–265, 280–302, 315–337, 352–369, 390–412, and 417–439; these read LMWP…TIMA, VGLW…PLVA, VAVS…LPIL, AGLF…ALRG, VISL…GIGP, GFAT…SYIY, LGLP…AIVL, MSVT…IRVG, LVQK…LIWF, VFDI…YQLM, MWIT…ARVA, and AGVW…MRLY.

This sequence belongs to the multi antimicrobial extrusion (MATE) (TC 2.A.66.1) family.

It localises to the cell inner membrane. In terms of biological role, multidrug efflux pump. In Acinetobacter baylyi (strain ATCC 33305 / BD413 / ADP1), this protein is Probable multidrug resistance protein NorM (norM).